A 174-amino-acid polypeptide reads, in one-letter code: Peptide methionine sulfoxide reductase MsrA (174 aa).

The active site involves C10.

It belongs to the MsrA Met sulfoxide reductase family.

The catalysed reaction is L-methionyl-[protein] + [thioredoxin]-disulfide + H2O = L-methionyl-(S)-S-oxide-[protein] + [thioredoxin]-dithiol. It carries out the reaction [thioredoxin]-disulfide + L-methionine + H2O = L-methionine (S)-S-oxide + [thioredoxin]-dithiol. Functionally, has an important function as a repair enzyme for proteins that have been inactivated by oxidation. Catalyzes the reversible oxidation-reduction of methionine sulfoxide in proteins to methionine. The protein is Peptide methionine sulfoxide reductase MsrA of Pseudarthrobacter chlorophenolicus (strain ATCC 700700 / DSM 12829 / CIP 107037 / JCM 12360 / KCTC 9906 / NCIMB 13794 / A6) (Arthrobacter chlorophenolicus).